Here is a 34-residue protein sequence, read N- to C-terminus: Photosystem II reaction center protein M (34 aa).

The chain crosses the membrane as a helical span at residues 7 to 27 (GFLATLLFVAVPMLFLIGLYI).

This sequence belongs to the PsbM family. As to quaternary structure, PSII is composed of 1 copy each of membrane proteins PsbA, PsbB, PsbC, PsbD, PsbE, PsbF, PsbH, PsbI, PsbJ, PsbK, PsbL, PsbM, PsbT, PsbX, PsbY, Psb30/Ycf12, peripheral proteins PsbO, CyanoQ (PsbQ), PsbU, PsbV and a large number of cofactors. It forms dimeric complexes.

It is found in the cellular thylakoid membrane. Its function is as follows. One of the components of the core complex of photosystem II (PSII). PSII is a light-driven water:plastoquinone oxidoreductase that uses light energy to abstract electrons from H(2)O, generating O(2) and a proton gradient subsequently used for ATP formation. It consists of a core antenna complex that captures photons, and an electron transfer chain that converts photonic excitation into a charge separation. This subunit is found at the monomer-monomer interface. The polypeptide is Photosystem II reaction center protein M (Prochlorococcus marinus (strain MIT 9303)).